The sequence spans 382 residues: Zinc metalloproteinase nas-7 (382 aa).

Residues 1-18 form the signal peptide; sequence MLLPWIITIVTVIPATLG. Positions 19–79 are excised as a propeptide; it reads HRNRVQDDEM…DIRLPRRHKR (61 aa). Residues 80-273 form the Peptidase M12A domain; it reads NGVSRAAKLW…SKINRMYNCP (194 aa). Disulfide bonds link cysteine 122–cysteine 272, cysteine 144–cysteine 163, cysteine 348–cysteine 382, cysteine 355–cysteine 375, and cysteine 362–cysteine 379. Histidine 171 is a binding site for Zn(2+). Residue glutamate 172 is part of the active site. Residues histidine 175 and histidine 181 each coordinate Zn(2+). The region spanning 348–382 is the ShKT domain; that stretch reads CEDRITVCWWTADRCRSPAIYQVMSSLCPKTCKFC.

Requires Zn(2+) as cofactor. As to expression, expressed in the head of adult hermaphrodites but not within pharynx cells. Expressed in pharyngeal muscles, mc cells, intestine, hypodermal seam cells, arcade cells, spermatheca, vulva and rectal epithelial cells.

The protein resides in the secreted. Its function is as follows. Metalloprotease. This Caenorhabditis elegans protein is Zinc metalloproteinase nas-7 (nas-7).